A 156-amino-acid chain; its full sequence is Arginine repressor (156 aa).

It belongs to the ArgR family.

It is found in the cytoplasm. Its pathway is amino-acid biosynthesis; L-arginine biosynthesis [regulation]. In terms of biological role, regulates arginine biosynthesis genes. The chain is Arginine repressor from Shewanella putrefaciens (strain CN-32 / ATCC BAA-453).